We begin with the raw amino-acid sequence, 543 residues long: Chaperonin GroEL (543 aa).

ATP is bound by residues 30 to 33 (TLGP), lysine 51, 87 to 91 (DGTTT), glycine 415, 480 to 482 (NAL), and aspartate 496.

The protein belongs to the chaperonin (HSP60) family. In terms of assembly, forms a cylinder of 14 subunits composed of two heptameric rings stacked back-to-back. Interacts with the co-chaperonin GroES.

It localises to the cytoplasm. The catalysed reaction is ATP + H2O + a folded polypeptide = ADP + phosphate + an unfolded polypeptide.. Together with its co-chaperonin GroES, plays an essential role in assisting protein folding. The GroEL-GroES system forms a nano-cage that allows encapsulation of the non-native substrate proteins and provides a physical environment optimized to promote and accelerate protein folding. This is Chaperonin GroEL from Gemmatimonas aurantiaca (strain DSM 14586 / JCM 11422 / NBRC 100505 / T-27).